The primary structure comprises 274 residues: Thymidylate synthase (274 aa).

Arginine 21 contacts dUMP. Residue histidine 51 coordinates (6R)-5,10-methylene-5,6,7,8-tetrahydrofolate. Position 123–124 (123–124 (RR)) interacts with dUMP. Cysteine 156 (nucleophile) is an active-site residue. DUMP-binding positions include 176 to 179 (RSAD), asparagine 187, and 217 to 219 (HIY). Aspartate 179 serves as a coordination point for (6R)-5,10-methylene-5,6,7,8-tetrahydrofolate. A (6R)-5,10-methylene-5,6,7,8-tetrahydrofolate-binding site is contributed by alanine 273.

This sequence belongs to the thymidylate synthase family. Bacterial-type ThyA subfamily. Homodimer.

The protein resides in the cytoplasm. The enzyme catalyses dUMP + (6R)-5,10-methylene-5,6,7,8-tetrahydrofolate = 7,8-dihydrofolate + dTMP. It participates in pyrimidine metabolism; dTTP biosynthesis. Functionally, catalyzes the reductive methylation of 2'-deoxyuridine-5'-monophosphate (dUMP) to 2'-deoxythymidine-5'-monophosphate (dTMP) while utilizing 5,10-methylenetetrahydrofolate (mTHF) as the methyl donor and reductant in the reaction, yielding dihydrofolate (DHF) as a by-product. This enzymatic reaction provides an intracellular de novo source of dTMP, an essential precursor for DNA biosynthesis. This Flavobacterium psychrophilum (strain ATCC 49511 / DSM 21280 / CIP 103535 / JIP02/86) protein is Thymidylate synthase.